The following is a 207-amino-acid chain: MNELSKIEQAIEDLRNGKLIIVADDADREAEGDLVGLSEFVTPEKVNFMTKYGRGLICVPITEERALELDLHAMATNNTDTYGTQFTVSVDYYTNSTGISTADRADTIRALAEPLSKAADFKRPGHMFPLIAKNAGVLERRGHTEAAVDLARLSNSIPSAYICEILNDDGTMARYPALETLAKDWDLTLITVEDLVQYREKEIAIEN.

D-ribulose 5-phosphate is bound by residues 28–29, Asp33, 140–144, and Glu164; these read RE and RRGHT. Residue Glu29 participates in Mg(2+) binding. His143 is a binding site for Mg(2+).

Belongs to the DHBP synthase family. Homodimer. The cofactor is Mg(2+). Requires Mn(2+) as cofactor.

It carries out the reaction D-ribulose 5-phosphate = (2S)-2-hydroxy-3-oxobutyl phosphate + formate + H(+). It participates in cofactor biosynthesis; riboflavin biosynthesis; 2-hydroxy-3-oxobutyl phosphate from D-ribulose 5-phosphate: step 1/1. Catalyzes the conversion of D-ribulose 5-phosphate to formate and 3,4-dihydroxy-2-butanone 4-phosphate. This Oceanobacillus iheyensis (strain DSM 14371 / CIP 107618 / JCM 11309 / KCTC 3954 / HTE831) protein is 3,4-dihydroxy-2-butanone 4-phosphate synthase.